We begin with the raw amino-acid sequence, 422 residues long: Solute carrier family 35 member D3 (422 aa).

The next 10 helical transmembrane spans lie at 9–29 (VLGI…NILL), 38–58 (FSFL…SLEL), 64–84 (LIAV…VAVL), 103–123 (MYVV…VLVL), 131–151 (GVLA…AGDL), 155–175 (PIGY…LVLI), 187–207 (LTAQ…CSFA), 224–244 (AMVS…FTTL), 257–277 (FVGV…FSDV), and 280–300 (TSLF…YCVA). A disordered region spans residues 339–365 (AKSGNSEPESAEGAGDSVQQGGQESRG). A compositionally biased stretch (polar residues) spans 355–364 (SVQQGGQESR).

The protein belongs to the TPT transporter family. SLC35D subfamily. In terms of assembly, could interact with ATG14, BECN1 and PIK3C3 that form the PI3KC3-C1/AIC/autophagy initiation complex; enhancing the formation of the AIC and promoting autophagy. Expressed in brain. Expressed in subsets of dopaminergic neurons. Expressed in maturing megakaryocytes.

It localises to the cytoplasmic vesicle. The protein localises to the secretory vesicle. Its subcellular location is the synaptic vesicle membrane. The protein resides in the early endosome membrane. It is found in the endoplasmic reticulum membrane. It carries out the reaction UDP-alpha-D-glucose(in) = UDP-alpha-D-glucose(out). Inhibited by proton uncouplers that directly abolish the proton electrochemical gradient. In terms of biological role, probable UDP-glucose transmembrane transporter involved in UDP-glucose transport from the cytosol to the lumen of synaptic vesicles. It is involved in platelet dense granules maturation. Functionally, alternatively, could function as a molecular adapter enhancing the formation of the PI3KC3-C1/AIC/autophagy initiation complex to promote autophagy in dopaminergic neurons. Could also regulate the plasma membrane localization of the D(1A) dopamine receptor/DRD1 and dopamine signaling. This Mus musculus (Mouse) protein is Solute carrier family 35 member D3.